Here is a 491-residue protein sequence, read N- to C-terminus: MSELFKLTLSDITAKLKAREVSAVELATEGLALCEAAQPKLNAFTAFDADKTLAMAKASDEKLARGEGGLIEGAPLAIKDLFAVEGVETAASSNILKGFKPTYESSVTAKLWENGGVFLCKTSMDEFAMGSSNETSNTGPVNNPWKGANGEMLTPGGSSGGSAAAVAADLCFGATGTDTGGSIRQPAAFTGTVGVKATYGRTSRWGAVAFASSLDHPGPFAKTVKDSALMLQAMSGHDPKDSTSLPNDVPDFVAAVGQSVKGLRIGVPKEYRVDGMPAEIDEAWQKGIDWLKAAGCEIVDISLPHTKYALPAYYIVAPAEASSNLARYDGMRYGNRVEGTNLNATYENTRGAGFGHEVQRRIMIGTYVLSAGYYDAYYLRAQKVRTRILQDFEQAFEKVDAVLTPSAPSAAFALGSKSDDPIAMYLNDVFTVTANLAGLPAMSVPAGVDKDGLPLGLQIITPALDEETMFKVGAAIEDSAGFVAKPENWWA.

Catalysis depends on charge relay system residues lysine 79 and serine 158. Residue serine 182 is the Acyl-ester intermediate of the active site.

Belongs to the amidase family. GatA subfamily. In terms of assembly, heterotrimer of A, B and C subunits.

It carries out the reaction L-glutamyl-tRNA(Gln) + L-glutamine + ATP + H2O = L-glutaminyl-tRNA(Gln) + L-glutamate + ADP + phosphate + H(+). Its function is as follows. Allows the formation of correctly charged Gln-tRNA(Gln) through the transamidation of misacylated Glu-tRNA(Gln) in organisms which lack glutaminyl-tRNA synthetase. The reaction takes place in the presence of glutamine and ATP through an activated gamma-phospho-Glu-tRNA(Gln). The polypeptide is Glutamyl-tRNA(Gln) amidotransferase subunit A (Maricaulis maris (strain MCS10) (Caulobacter maris)).